The sequence spans 335 residues: ADP-L-glycero-D-manno-heptose-6-epimerase (335 aa).

Residues 11–12 (FI), 32–33 (DD), lysine 39, 75–79 (EGACS), and asparagine 92 contribute to the NADP(+) site. Catalysis depends on tyrosine 139, which acts as the Proton acceptor. Lysine 143 is a binding site for NADP(+). Asparagine 172 contributes to the substrate binding site. Residues valine 173 and lysine 181 each coordinate NADP(+). Lysine 181 acts as the Proton acceptor in catalysis. Substrate-binding positions include arginine 183, histidine 190, 204–207 (FGDY), arginine 217, and tyrosine 296.

The protein belongs to the NAD(P)-dependent epimerase/dehydratase family. HldD subfamily. Homopentamer. The cofactor is NADP(+).

The catalysed reaction is ADP-D-glycero-beta-D-manno-heptose = ADP-L-glycero-beta-D-manno-heptose. It functions in the pathway nucleotide-sugar biosynthesis; ADP-L-glycero-beta-D-manno-heptose biosynthesis; ADP-L-glycero-beta-D-manno-heptose from D-glycero-beta-D-manno-heptose 7-phosphate: step 4/4. Functionally, catalyzes the interconversion between ADP-D-glycero-beta-D-manno-heptose and ADP-L-glycero-beta-D-manno-heptose via an epimerization at carbon 6 of the heptose. The chain is ADP-L-glycero-D-manno-heptose-6-epimerase from Polaromonas naphthalenivorans (strain CJ2).